Consider the following 581-residue polypeptide: Interleukin-22 receptor subunit alpha-1 (581 aa).

An N-terminal signal peptide occupies residues 1–15 (MRTLLTILAAGSLLA). The Extracellular segment spans residues 16–228 (HITEDTSDLL…VKTLPDRTWT (213 aa)). 2 Fibronectin type-III domains span residues 18–115 (TEDT…RFSS) and 141–221 (PTYT…RVKT). C71 and C79 are disulfide-bonded. N80 carries an N-linked (GlcNAc...) asparagine glycan. C128 and C217 are disulfide-bonded. The chain crosses the membrane as a helical span at residues 229-249 (YSFSGAFLFSLGFLVAGLCYL). At 250 to 581 (SYRYITKPPP…GLALTVQWES (332 aa)) the chain is on the cytoplasmic side. Disordered stretches follow at residues 354 to 493 (QAAP…SSLK) and 539 to 563 (PSDE…LESP). Residues 378 to 389 (TPQAVSETQLPS) are compositionally biased toward polar residues. Phosphoserine occurs at positions 410 and 414. Residues 440 to 449 (CSPTGLSLQE) are compositionally biased toward polar residues.

Belongs to the type II cytokine receptor family. As to quaternary structure, heterodimer with IL10RB and with IL20RB. Interacts with FBXW12; the interaction promotes ubiquitination of IL22RA1. In terms of processing, ubiquitinated.

The protein resides in the cell membrane. Component of the receptor for IL20, IL22 and IL24. Component of IL22 receptor formed by IL22RA1 and IL10RB enabling IL22 signaling via JAK/STAT pathways. IL22 also induces activation of MAPK1/MAPK3 and Akt kinases pathways. Component of one of the receptor for IL20 and IL24 formed by IL22RA1 and IL20RB also signaling through STATs activation. Mediates IL24 antiangiogenic activity as well as IL24 inhibitory effect on endothelial cell tube formation and differentiation. The protein is Interleukin-22 receptor subunit alpha-1 (IL22RA1) of Bos taurus (Bovine).